The primary structure comprises 417 residues: Autophagy-related protein 18 (417 aa).

WD repeat units lie at residues 1 to 36, 76 to 114, 185 to 225, and 230 to 269; these read MSMNFVTFNQDYSYLAVGTSKGFRIFTTDPFGKSYE, ELTFPTTVLAIRLNRKRLVIVLEDQIYIYDIQTMKLVYT, AHKS…KLYQ, and SMPSRIYSMSFNITSTLLCVSSATETIHIFKLGQQQGLSK. The short motif at 226-230 is the L/FRRG motif element; sequence FRRGS. A disordered region spans residues 267-300; that stretch reads LSKTSSPSRKLESSRGSGDESAVESASSEMSSRK. The span at 285–296 shows a compositional bias: low complexity; sequence DESAVESASSEM. WD repeat units lie at residues 300 to 346 and 355 to 395; these read KHNG…AWIK and GGSG…GGEG.

Belongs to the WD repeat PROPPIN family. As to quaternary structure, component of the PI(3,5)P2 regulatory complex.

Its subcellular location is the preautophagosomal structure membrane. The protein localises to the vacuole membrane. It localises to the endosome membrane. The PI(3,5)P2 regulatory complex regulates both the synthesis and turnover of phosphatidylinositol 3,5-bisphosphate (PtdIns(3,5)P2). Necessary for proper vacuole morphology. Plays an important role in osmotically-induced vacuole fragmentation. Required for cytoplasm to vacuole transport (Cvt) vesicle formation, pexophagy and starvation-induced autophagy. Involved in correct ATG9 trafficking to the pre-autophagosomal structure. Might also be involved in premeiotic DNA replication. In Coccidioides immitis (strain RS) (Valley fever fungus), this protein is Autophagy-related protein 18 (ATG18).